Here is a 72-residue protein sequence, read N- to C-terminus: Translation initiation factor IF-1 (72 aa).

The region spanning 1-72 (MSKEDSIEVT…TKGRITFRHR (72 aa)) is the S1-like domain.

Belongs to the IF-1 family. Component of the 30S ribosomal translation pre-initiation complex which assembles on the 30S ribosome in the order IF-2 and IF-3, IF-1 and N-formylmethionyl-tRNA(fMet); mRNA recruitment can occur at any time during PIC assembly.

It localises to the cytoplasm. In terms of biological role, one of the essential components for the initiation of protein synthesis. Stabilizes the binding of IF-2 and IF-3 on the 30S subunit to which N-formylmethionyl-tRNA(fMet) subsequently binds. Helps modulate mRNA selection, yielding the 30S pre-initiation complex (PIC). Upon addition of the 50S ribosomal subunit IF-1, IF-2 and IF-3 are released leaving the mature 70S translation initiation complex. In Solibacter usitatus (strain Ellin6076), this protein is Translation initiation factor IF-1.